A 365-amino-acid chain; its full sequence is Chorismate synthase (365 aa).

NADP(+) is bound at residue arginine 47. Residues 124 to 126 (RAS), glycine 287, 302 to 306 (KPTAT), and arginine 328 contribute to the FMN site.

Belongs to the chorismate synthase family. In terms of assembly, homotetramer. It depends on FMNH2 as a cofactor.

The catalysed reaction is 5-O-(1-carboxyvinyl)-3-phosphoshikimate = chorismate + phosphate. It functions in the pathway metabolic intermediate biosynthesis; chorismate biosynthesis; chorismate from D-erythrose 4-phosphate and phosphoenolpyruvate: step 7/7. Catalyzes the anti-1,4-elimination of the C-3 phosphate and the C-6 proR hydrogen from 5-enolpyruvylshikimate-3-phosphate (EPSP) to yield chorismate, which is the branch point compound that serves as the starting substrate for the three terminal pathways of aromatic amino acid biosynthesis. This reaction introduces a second double bond into the aromatic ring system. The chain is Chorismate synthase from Prochlorococcus marinus (strain MIT 9215).